We begin with the raw amino-acid sequence, 166 residues long: Bacterial non-heme ferritin (166 aa).

Positions Leu-2–Gly-145 constitute a Ferritin-like diiron domain. Positions 17, 50, 53, 94, and 127 each coordinate Fe cation.

Belongs to the ferritin family. Prokaryotic subfamily.

It localises to the cytoplasm. It catalyses the reaction 4 Fe(2+) + O2 + 6 H2O = 4 iron(III) oxide-hydroxide + 12 H(+). Functionally, iron-storage protein. This chain is Bacterial non-heme ferritin (ftnA), found in Staphylococcus aureus (strain MRSA252).